The primary structure comprises 227 residues: Large ribosomal subunit protein uL3 (227 aa).

An N5-methylglutamine modification is found at Q158.

This sequence belongs to the universal ribosomal protein uL3 family. Part of the 50S ribosomal subunit. Forms a cluster with proteins L14 and L19. Post-translationally, methylated by PrmB.

One of the primary rRNA binding proteins, it binds directly near the 3'-end of the 23S rRNA, where it nucleates assembly of the 50S subunit. This Polaromonas sp. (strain JS666 / ATCC BAA-500) protein is Large ribosomal subunit protein uL3.